The primary structure comprises 417 residues: UDP-N-acetylglucosamine 1-carboxyvinyltransferase 2 (417 aa).

22–23 (KN) provides a ligand contact to phosphoenolpyruvate. Arg92 provides a ligand contact to UDP-N-acetyl-alpha-D-glucosamine. Cys116 serves as the catalytic Proton donor. Cys116 carries the post-translational modification 2-(S-cysteinyl)pyruvic acid O-phosphothioketal. Residues 121–125 (RPIDL), Asp305, and Ile327 each bind UDP-N-acetyl-alpha-D-glucosamine.

It belongs to the EPSP synthase family. MurA subfamily.

The protein localises to the cytoplasm. The enzyme catalyses phosphoenolpyruvate + UDP-N-acetyl-alpha-D-glucosamine = UDP-N-acetyl-3-O-(1-carboxyvinyl)-alpha-D-glucosamine + phosphate. It functions in the pathway cell wall biogenesis; peptidoglycan biosynthesis. Functionally, cell wall formation. Adds enolpyruvyl to UDP-N-acetylglucosamine. The polypeptide is UDP-N-acetylglucosamine 1-carboxyvinyltransferase 2 (Caldanaerobacter subterraneus subsp. tengcongensis (strain DSM 15242 / JCM 11007 / NBRC 100824 / MB4) (Thermoanaerobacter tengcongensis)).